The sequence spans 444 residues: Cobyrinate a,c-diamide synthase (444 aa).

One can recognise a GATase cobBQ-type domain in the interval 250–438 (IIAIAQDRAF…PHIHFFGSYK (189 aa)). Catalysis depends on C332, which acts as the Nucleophile.

It belongs to the CobB/CbiA family. Mg(2+) serves as cofactor.

The catalysed reaction is cob(II)yrinate + 2 L-glutamine + 2 ATP + 2 H2O = cob(II)yrinate a,c diamide + 2 L-glutamate + 2 ADP + 2 phosphate + 2 H(+). It participates in cofactor biosynthesis; adenosylcobalamin biosynthesis; cob(II)yrinate a,c-diamide from sirohydrochlorin (anaerobic route): step 10/10. Its function is as follows. Catalyzes the ATP-dependent amidation of the two carboxylate groups at positions a and c of cobyrinate, using either L-glutamine or ammonia as the nitrogen source. The sequence is that of Cobyrinate a,c-diamide synthase from Fusobacterium nucleatum subsp. nucleatum (strain ATCC 25586 / DSM 15643 / BCRC 10681 / CIP 101130 / JCM 8532 / KCTC 2640 / LMG 13131 / VPI 4355).